The sequence spans 261 residues: Follistatin-related protein 3 (261 aa).

The N-terminal stretch at 1–26 (MRPRAPGPLWPLPWGALAWAVGFVGS) is a signal peptide. Residues 36 to 107 (GVCWLQQGRE…SCEGVECGPG (72 aa)) enclose the TB domain. Disulfide bonds link Cys38–Cys61, Cys48–Cys92, Cys62–Cys95, Cys99–Cys110, Cys104–Cys119, Cys121–Cys153, Cys125–Cys146, and Cys135–Cys167. Asn73 is a glycosylation site (N-linked (GlcNAc...) asparagine). The Follistatin-like 1 domain maps to 99–119 (CEGVECGPGKACRMLGGRPRC). 2 Kazal-like domains span residues 113-169 (LGGR…RCRK) and 189-245 (SAHC…SCAG). One can recognise a Follistatin-like 2 domain in the interval 170–193 (SCAHVVCLRPQSCVVDQTGSAHCV). Cystine bridges form between Cys195/Cys229, Cys200/Cys222, and Cys211/Cys243. Asn215 is a glycosylation site (N-linked (GlcNAc...) asparagine). The disordered stretch occupies residues 242–261 (SCAGTPEPLDPESEEEENFV). A compositionally biased stretch (acidic residues) spans 250–261 (LDPESEEEENFV).

As to quaternary structure, interacts with INHBA and INHBB. Interacts with FN1. Interacts with ADAM12. Interacts with MLLT10; the interaction enhances MLLT10 in vitro transcriptional activity and self-association. Interacts with MSTN.

The protein resides in the secreted. It is found in the nucleus. In terms of biological role, the secreted form is a binding and antagonizing protein for members of the TGF-beta family, such as activin, BMP2 and MSTN. Inhibits activin A-, activin B-, BMP2- and MSDT-induced cellular signaling; more effective on activin A than on activin B. Involved in bone formation; inhibits osteoclast differentiation. Involved in hematopoiesis; involved in differentiation of hemopoietic progenitor cells, increases hematopoietic cell adhesion to fibronectin and seems to contribute to the adhesion of hematopoietic precursor cells to the bone marrow stroma. The nuclear form is probably involved in transcriptional regulation via interaction with MLLT10. This chain is Follistatin-related protein 3 (FSTL3), found in Bos taurus (Bovine).